The sequence spans 372 residues: Molybdopterin synthase catalytic subunit (372 aa).

Substrate is bound by residues 101-102, K117, and 124-126; these read HR and KKE.

The protein belongs to the MoaE family. MOCS2B subfamily. As to quaternary structure, heterotetramer; composed of 2 small (Mocs2A) and 2 large (Mocs2B) subunits.

Its subcellular location is the cytoplasm. It catalyses the reaction 2 [molybdopterin-synthase sulfur-carrier protein]-C-terminal-Gly-aminoethanethioate + cyclic pyranopterin phosphate + H2O = molybdopterin + 2 [molybdopterin-synthase sulfur-carrier protein]-C-terminal Gly-Gly + 2 H(+). It participates in cofactor biosynthesis; molybdopterin biosynthesis. Its function is as follows. Catalytic subunit of the molybdopterin synthase complex, a complex that catalyzes the conversion of precursor Z into molybdopterin. Acts by mediating the incorporation of 2 sulfur atoms from thiocarboxylated Mocs2A into precursor Z to generate a dithiolene group. The chain is Molybdopterin synthase catalytic subunit from Drosophila willistoni (Fruit fly).